A 796-amino-acid chain; its full sequence is RalBP1-associated Eps domain-containing protein 1 (796 aa).

An EH 1 domain is found at 10–113; sequence EQKYYSDLFS…SKNEQESRHA (104 aa). The disordered stretch occupies residues 105–237; it reads KNEQESRHAA…ENWVSFADTP (133 aa). Residues 115–126 show a composition bias toward polar residues; the sequence is SYSSDSENQGSY. Phosphoserine occurs at positions 143, 145, 162, 166, and 170. A compositionally biased stretch (polar residues) spans 145–156; it reads SHDTVQPRTSAD. Residue Thr-173 is modified to Phosphothreonine. 2 positions are modified to phosphoserine: Ser-272 and Ser-273. Positions 285–374 constitute an EH 2 domain; the sequence is QRQYYVNQFK…ESLMPKLIDL (90 aa). Tyr-288 is modified (phosphotyrosine). Residue Ser-307 is modified to Phosphoserine. The region spanning 318–353 is the EF-hand domain; that stretch reads LPILELSHIWELSDFDKDGALTLDEFCAAFHLVVAR. Positions 331, 333, 335, and 342 each coordinate Ca(2+). The interval 377-433 is disordered; sequence SADVGDQPGEVGYSGSPAEAPPSKSPSMPSLNQTWPELNQSSEQWETFSERSSSSQT. The span at 407–433 shows a compositional bias: polar residues; it reads LNQTWPELNQSSEQWETFSERSSSSQT. A phosphoserine mark is found at Ser-475, Ser-482, Ser-489, and Ser-540. Over residues 506 to 543 the composition is skewed to polar residues; that stretch reads GNTVADGYSSSDSFTSDPEQIGSNVTRQRSHSGTSPDN. Disordered regions lie at residues 506–624 and 638–725; these read GNTV…IPEQ and ASNV…QKTG. A Phosphothreonine modification is found at Thr-544. Residues 544–554 are compositionally biased toward pro residues; it reads TAPPPPPPRPQ. Ser-562 carries the post-translational modification Phosphoserine. Polar residues predominate over residues 563–574; it reads LDMNRTFTVTTG. Residues 575–584 are compositionally biased toward low complexity; that stretch reads QQQAGVVAHP. Positions 585–596 are enriched in pro residues; it reads PAVPPRPQPSQA. Residues 612–623 are compositionally biased toward polar residues; it reads THTSTSPQQIPE. The interaction with RALBP1 stretch occupies residues 652-796; it reads HPEVLPAEKA…LEQLRPFSHL (145 aa). Composition is skewed to basic and acidic residues over residues 671-681 and 708-722; these read AKTDSKTEEKT and KSED…EHTQ. A phosphoserine mark is found at Ser-709 and Ser-740. Positions 751 to 791 form a coiled coil; it reads SIRRNKETNTVLARLNSELQQQLKDVLEERISLEVQLEQLR.

Homodimer (Potential). Interacts with RAB11FIP2. Interacts with RALBP1, CRK and GRB2. Binding to RALBP1 does not affect its Ral-binding activity. Forms a complex with the SH3 domains of CRK and GRB2 which may link it to an EGF-responsive tyrosine kinase. Interacts with AMPH, ITSN1 (via SH3 domains) and SGIP1; may be involved in clathrin-mediated endocytosis. EGF stimulates phosphorylation on Tyr-residues. Widely expressed with highest levels in heart and testis.

It localises to the membrane. The protein localises to the clathrin-coated pit. Its function is as follows. May coordinate the cellular actions of activated EGF receptors and Ral-GTPases. This is RalBP1-associated Eps domain-containing protein 1 (REPS1) from Homo sapiens (Human).